A 266-amino-acid chain; its full sequence is Imidazole glycerol phosphate synthase subunit HisF (266 aa).

Residues Asp-11 and Asp-130 contribute to the active site. The tract at residues Arg-134–Ser-157 is disordered.

It belongs to the HisA/HisF family. In terms of assembly, heterodimer of HisH and HisF.

The protein resides in the cytoplasm. It carries out the reaction 5-[(5-phospho-1-deoxy-D-ribulos-1-ylimino)methylamino]-1-(5-phospho-beta-D-ribosyl)imidazole-4-carboxamide + L-glutamine = D-erythro-1-(imidazol-4-yl)glycerol 3-phosphate + 5-amino-1-(5-phospho-beta-D-ribosyl)imidazole-4-carboxamide + L-glutamate + H(+). It participates in amino-acid biosynthesis; L-histidine biosynthesis; L-histidine from 5-phospho-alpha-D-ribose 1-diphosphate: step 5/9. Its function is as follows. IGPS catalyzes the conversion of PRFAR and glutamine to IGP, AICAR and glutamate. The HisF subunit catalyzes the cyclization activity that produces IGP and AICAR from PRFAR using the ammonia provided by the HisH subunit. The protein is Imidazole glycerol phosphate synthase subunit HisF of Paracidovorax citrulli (strain AAC00-1) (Acidovorax citrulli).